The chain runs to 191 residues: ECF RNA polymerase sigma factor ShbA (191 aa).

The tract at residues 27–98 (LLAHVHPLAL…HKVADLQRAA (72 aa)) is sigma-70 factor domain-2. Residues 100 to 122 (RHPGSTAVPSDEMPERPDDSLGP) are disordered. Residues 112 to 122 (MPERPDDSLGP) are compositionally biased toward basic and acidic residues. The tract at residues 138–187 (LLANLPENQRELLVLRVAVGLTAEETGQMLGMSPGAVRVAQHRALSRLRA) is sigma-70 factor domain-4. A DNA-binding region (H-T-H motif) is located at residues 160-179 (AEETGQMLGMSPGAVRVAQH).

Belongs to the sigma-70 factor family. ECF subfamily.

In terms of biological role, sigma factors are initiation factors that promote the attachment of RNA polymerase to specific initiation sites and are then released. Extracytoplasmic function (ECF) sigma factors are held in an inactive form by an anti-sigma factor until released. This alternative sigma factor governs the transcription of the principal sigma factor HrdB (SigA) throughout growth. Acts by binding to the promoter region. This Streptomyces griseus subsp. griseus (strain JCM 4626 / CBS 651.72 / NBRC 13350 / KCC S-0626 / ISP 5235) protein is ECF RNA polymerase sigma factor ShbA.